A 1051-amino-acid chain; its full sequence is Ubiquitin-activating enzyme E1 1 (1051 aa).

Repeat copies occupy residues 56-194 (GRET…GSVF) and 453-605 (GSKL…QMVI). Residues 56 to 605 (GRETMKRLFG…GAKCNTQMVI (550 aa)) are 2 approximate repeats. ATP-binding positions include A472, D498, R509, K522, and 570 to 571 (DN). C626 acts as the Glycyl thioester intermediate in catalysis.

It belongs to the ubiquitin-activating E1 family. Monomer. In terms of processing, the N-terminus is blocked.

It carries out the reaction ATP + ubiquitin + [E1 ubiquitin-activating enzyme]-L-cysteine = AMP + diphosphate + S-ubiquitinyl-[E1 ubiquitin-activating enzyme]-L-cysteine.. The protein operates within protein modification; protein ubiquitination. Its function is as follows. Activates ubiquitin by first adenylating its C-terminal glycine residue with ATP, and thereafter linking this residue to the side chain of a cysteine residue in E1, yielding a ubiquitin-E1 thioester and free AMP. In Triticum aestivum (Wheat), this protein is Ubiquitin-activating enzyme E1 1.